Reading from the N-terminus, the 360-residue chain is DNA replication and repair protein RecF (360 aa).

Residue 30-37 (GHNGSGKT) participates in ATP binding.

This sequence belongs to the RecF family.

It is found in the cytoplasm. In terms of biological role, the RecF protein is involved in DNA metabolism; it is required for DNA replication and normal SOS inducibility. RecF binds preferentially to single-stranded, linear DNA. It also seems to bind ATP. The chain is DNA replication and repair protein RecF from Actinobacillus pleuropneumoniae serotype 3 (strain JL03).